A 185-amino-acid chain; its full sequence is Ribosome-recycling factor (185 aa).

Belongs to the RRF family.

The protein localises to the cytoplasm. Its function is as follows. Responsible for the release of ribosomes from messenger RNA at the termination of protein biosynthesis. May increase the efficiency of translation by recycling ribosomes from one round of translation to another. This Yersinia enterocolitica serotype O:8 / biotype 1B (strain NCTC 13174 / 8081) protein is Ribosome-recycling factor.